We begin with the raw amino-acid sequence, 233 residues long: Large ribosomal subunit protein uL1 (233 aa).

The protein belongs to the universal ribosomal protein uL1 family. In terms of assembly, part of the 50S ribosomal subunit.

Binds directly to 23S rRNA. The L1 stalk is quite mobile in the ribosome, and is involved in E site tRNA release. Its function is as follows. Protein L1 is also a translational repressor protein, it controls the translation of the L11 operon by binding to its mRNA. In Zymomonas mobilis subsp. mobilis (strain ATCC 31821 / ZM4 / CP4), this protein is Large ribosomal subunit protein uL1.